We begin with the raw amino-acid sequence, 338 residues long: MLREEVAVSTRTLQWRCVESRTDSKRLYYGRFVLSPLMKGQADTIGIAMRRALLGEIEGTCITHAKSEKIPHEYSTIVGIEESVHEILMNLKEIVLRSNLYGTCDASICVKGPINITAKDIISPPSVEIVDTTQHIASLTEPFDLCIGLQIERNRGYRMKTPNKAQNGSYPIDAVFMPVRNANHSIHSYGNGNEKQEILFLEIWTNGSLTPKEALHEASRNLIDLFIPFLHAEEQDIILEDNQNRVTLPFFTFHDGLAKLKKKNEIALKFIFIDQSELPSRTYNCLKKSNINTLLDLLNKSQEDLLKIEHFRIEDVKRVLGILQKRFVIDLPKNKFSN.

The alpha N-terminal domain (alpha-NTD) stretch occupies residues 1–233 (MLREEVAVST…DLFIPFLHAE (233 aa)). Residues 266-338 (IALKFIFIDQ…IDLPKNKFSN (73 aa)) form an alpha C-terminal domain (alpha-CTD) region.

It belongs to the RNA polymerase alpha chain family. In plastids the minimal PEP RNA polymerase catalytic core is composed of four subunits: alpha, beta, beta', and beta''. When a (nuclear-encoded) sigma factor is associated with the core the holoenzyme is formed, which can initiate transcription.

It localises to the plastid. Its subcellular location is the chloroplast. The enzyme catalyses RNA(n) + a ribonucleoside 5'-triphosphate = RNA(n+1) + diphosphate. Functionally, DNA-dependent RNA polymerase catalyzes the transcription of DNA into RNA using the four ribonucleoside triphosphates as substrates. The sequence is that of DNA-directed RNA polymerase subunit alpha from Nandina domestica (Heavenly bamboo).